We begin with the raw amino-acid sequence, 464 residues long: 3-isopropylmalate dehydratase large subunit (464 aa).

Positions 337, 397, and 400 each coordinate [4Fe-4S] cluster.

It belongs to the aconitase/IPM isomerase family. LeuC type 1 subfamily. In terms of assembly, heterodimer of LeuC and LeuD. The cofactor is [4Fe-4S] cluster.

It catalyses the reaction (2R,3S)-3-isopropylmalate = (2S)-2-isopropylmalate. It participates in amino-acid biosynthesis; L-leucine biosynthesis; L-leucine from 3-methyl-2-oxobutanoate: step 2/4. In terms of biological role, catalyzes the isomerization between 2-isopropylmalate and 3-isopropylmalate, via the formation of 2-isopropylmaleate. In Bacillus cereus (strain AH187), this protein is 3-isopropylmalate dehydratase large subunit.